We begin with the raw amino-acid sequence, 279 residues long: Pantothenate synthetase (279 aa).

26–33 is an ATP binding site; it reads MGNLHEGH. The active-site Proton donor is His33. Gln57 lines the (R)-pantoate pocket. Position 57 (Gln57) interacts with beta-alanine. 144-147 is an ATP binding site; that stretch reads GKKD. Gln150 is a (R)-pantoate binding site. Residues Val173 and 181–184 contribute to the ATP site; that span reads LSSR.

The protein belongs to the pantothenate synthetase family. In terms of assembly, homodimer.

Its subcellular location is the cytoplasm. The catalysed reaction is (R)-pantoate + beta-alanine + ATP = (R)-pantothenate + AMP + diphosphate + H(+). It functions in the pathway cofactor biosynthesis; (R)-pantothenate biosynthesis; (R)-pantothenate from (R)-pantoate and beta-alanine: step 1/1. Its function is as follows. Catalyzes the condensation of pantoate with beta-alanine in an ATP-dependent reaction via a pantoyl-adenylate intermediate. The protein is Pantothenate synthetase of Burkholderia lata (strain ATCC 17760 / DSM 23089 / LMG 22485 / NCIMB 9086 / R18194 / 383).